The chain runs to 396 residues: UPF0046 protein T07D4.2 (396 aa).

The interval 73 to 94 (SRRGSIASGIPMDKKTRRKLSN) is disordered.

Belongs to the UPF0046 family.

The protein is UPF0046 protein T07D4.2 of Caenorhabditis elegans.